A 794-amino-acid polypeptide reads, in one-letter code: E3 ubiquitin-protein ligase wwp-1 (794 aa).

Residues 1–16 are compositionally biased toward low complexity; the sequence is MARNEPSSQQPSSSGS. 2 disordered regions span residues 1-31 and 155-198; these read MARN…KPSK and RSAG…AAPT. One can recognise a C2 domain in the interval 10–124; that stretch reads QPSSSGSNGT…TRNENGEFKN (115 aa). Positions 17 to 27 are enriched in polar residues; the sequence is NGTPAQQNGSA. Positions 161–186 are enriched in low complexity; the sequence is AETAASASSEASTSNGVATSSSARRP. WW domains are found at residues 219-252, 253-286, 324-358, and 366-399; these read EQLP…RPST, QPLP…RPTA, GPLP…DPRT, and QPLP…DPRT. An HECT domain is found at 460-794; the sequence is NAVDLRRRLY…IEMTEGFGNE (335 aa). Residue Cys762 is the Glycyl thioester intermediate of the active site.

Interacts (via WW domains) with Kruppel-like factor klf-1. Interacts with ubiquitin-conjugating enzyme E2 ubc-18. Expressed in neurons localized in the head and tail of adults.

It catalyses the reaction S-ubiquitinyl-[E2 ubiquitin-conjugating enzyme]-L-cysteine + [acceptor protein]-L-lysine = [E2 ubiquitin-conjugating enzyme]-L-cysteine + N(6)-ubiquitinyl-[acceptor protein]-L-lysine.. It participates in protein modification; protein ubiquitination. Functionally, E3 ubiquitin-protein ligase which accepts ubiquitin from an E2 ubiquitin-conjugating enzyme in the form of a thioester and then directly transfers the ubiquitin to targeted substrates. Ubiquitinates klf-1. Required for diet restriction-mediated lifespan extension, acting in concert with Kruppel-like factor klf-1 in the intestine to perhaps modulate genes involved in lipid metabolism. Probably acting downstream of the Insulin/IGF-1-like signaling (IIS) mediated pathway, plays a role in the immune response to infection by the Gram-negative bacterium P.aeruginosa, at least partly in response to bacterial pore-forming toxins. In Caenorhabditis elegans, this protein is E3 ubiquitin-protein ligase wwp-1.